Consider the following 637-residue polypeptide: Chaperone protein HtpG (637 aa).

The interval 1-345 is a; substrate-binding; it reads MSQQETHGFQ…SNDLPLNVSR (345 aa). Residues 346 to 562 are b; that stretch reads EILQDNHVTK…DGEMSTQMIK (217 aa). The c stretch occupies residues 563–637; that stretch reads LMQAAGQPVP…MNQMLLANMK (75 aa).

The protein belongs to the heat shock protein 90 family. As to quaternary structure, homodimer.

The protein resides in the cytoplasm. Its function is as follows. Molecular chaperone. Has ATPase activity. The sequence is that of Chaperone protein HtpG from Shewanella baltica (strain OS155 / ATCC BAA-1091).